Consider the following 39-residue polypeptide: MTGSVNGTATWVGLPAQPLRSRVKVRHVTFLVFANLRLW.

This is an uncharacterized protein from Saccharomyces cerevisiae (strain ATCC 204508 / S288c) (Baker's yeast).